The chain runs to 368 residues: Chaperone protein DnaJ (368 aa).

One can recognise a J domain in the interval 5–69; it reads DYYEVLGLSQ…QKRAQYDQFG (65 aa). A CR-type zinc finger spans residues 130–212; sequence GKELNVEIPV…CHGSGKVRKR (83 aa). Zn(2+)-binding residues include Cys-143, Cys-146, Cys-160, Cys-163, Cys-186, Cys-189, Cys-200, and Cys-203. 4 CXXCXGXG motif repeats span residues 143–150, 160–167, 186–193, and 200–207; these read CDTCKGSG, CKHCSGSG, CGHCSGTG, and CTTCHGSG.

The protein belongs to the DnaJ family. As to quaternary structure, homodimer. Zn(2+) is required as a cofactor.

The protein localises to the cytoplasm. Its function is as follows. Participates actively in the response to hyperosmotic and heat shock by preventing the aggregation of stress-denatured proteins and by disaggregating proteins, also in an autonomous, DnaK-independent fashion. Unfolded proteins bind initially to DnaJ; upon interaction with the DnaJ-bound protein, DnaK hydrolyzes its bound ATP, resulting in the formation of a stable complex. GrpE releases ADP from DnaK; ATP binding to DnaK triggers the release of the substrate protein, thus completing the reaction cycle. Several rounds of ATP-dependent interactions between DnaJ, DnaK and GrpE are required for fully efficient folding. Also involved, together with DnaK and GrpE, in the DNA replication of plasmids through activation of initiation proteins. The sequence is that of Chaperone protein DnaJ from Bacillus mycoides (strain KBAB4) (Bacillus weihenstephanensis).